A 405-amino-acid chain; its full sequence is Argininosuccinate synthase (405 aa).

ATP is bound by residues 10 to 18 (AYSGGLDTS) and Ala37. L-citrulline-binding residues include Tyr88 and Ser93. Position 118 (Gly118) interacts with ATP. L-aspartate is bound by residues Thr120, Asn124, and Asp125. Asn124 contributes to the L-citrulline binding site. L-citrulline contacts are provided by Arg128, Ser179, Ser188, Glu264, and Tyr276.

The protein belongs to the argininosuccinate synthase family. Type 1 subfamily. As to quaternary structure, homotetramer.

Its subcellular location is the cytoplasm. The catalysed reaction is L-citrulline + L-aspartate + ATP = 2-(N(omega)-L-arginino)succinate + AMP + diphosphate + H(+). The protein operates within amino-acid biosynthesis; L-arginine biosynthesis; L-arginine from L-ornithine and carbamoyl phosphate: step 2/3. This chain is Argininosuccinate synthase, found in Pseudomonas aeruginosa (strain LESB58).